We begin with the raw amino-acid sequence, 459 residues long: Argininosuccinate lyase (459 aa).

This sequence belongs to the lyase 1 family. Argininosuccinate lyase subfamily.

The protein localises to the cytoplasm. The catalysed reaction is 2-(N(omega)-L-arginino)succinate = fumarate + L-arginine. Its pathway is amino-acid biosynthesis; L-arginine biosynthesis; L-arginine from L-ornithine and carbamoyl phosphate: step 3/3. In Prochlorococcus marinus (strain AS9601), this protein is Argininosuccinate lyase.